Reading from the N-terminus, the 316-residue chain is Nucleoprotein (316 aa).

RNA is bound by residues Tyr43, Tyr46, Val76, Arg122, and Lys240.

This sequence belongs to the tenuiviruses nucleocapsid protein family.

It localises to the virion. Its subcellular location is the host cytoplasm. In terms of biological role, encapsidates the genome, protecting it from nucleases. The encapsidated genomic RNA is termed the nucleocapsid (NC), and serves as template for viral transcription and replication. The protein is Nucleoprotein of Maize stripe virus (MStV).